The following is a 308-amino-acid chain: uncharacterized protein (308 aa).

This is an uncharacterized protein from Bos taurus (Bovine).